The primary structure comprises 395 residues: uncharacterized protein (395 aa).

The tract at residues 247-270 is disordered; it reads GGTVVPPNPDQPNPTPPDSSSPNY. Residues 252–265 are compositionally biased toward pro residues; sequence PPNPDQPNPTPPDS.

This is an uncharacterized protein from Vibrio cholerae serotype O1 (strain ATCC 39315 / El Tor Inaba N16961).